Reading from the N-terminus, the 222-residue chain is Ribonuclease HII (222 aa).

In terms of domain architecture, RNase H type-2 spans 17 to 206 (DLVAGVDEVG…VRAAHEARAS (190 aa)). A divalent metal cation is bound by residues Asp-23, Glu-24, and Asp-115.

The protein belongs to the RNase HII family. The cofactor is Mn(2+). Mg(2+) is required as a cofactor.

The protein localises to the cytoplasm. The enzyme catalyses Endonucleolytic cleavage to 5'-phosphomonoester.. In terms of biological role, endonuclease that specifically degrades the RNA of RNA-DNA hybrids. The chain is Ribonuclease HII from Pseudomonas savastanoi pv. phaseolicola (strain 1448A / Race 6) (Pseudomonas syringae pv. phaseolicola (strain 1448A / Race 6)).